The chain runs to 177 residues: Peptide methionine sulfoxide reductase MsrA (177 aa).

Cysteine 15 is an active-site residue.

Belongs to the MsrA Met sulfoxide reductase family.

It carries out the reaction L-methionyl-[protein] + [thioredoxin]-disulfide + H2O = L-methionyl-(S)-S-oxide-[protein] + [thioredoxin]-dithiol. It catalyses the reaction [thioredoxin]-disulfide + L-methionine + H2O = L-methionine (S)-S-oxide + [thioredoxin]-dithiol. In terms of biological role, has an important function as a repair enzyme for proteins that have been inactivated by oxidation. Catalyzes the reversible oxidation-reduction of methionine sulfoxide in proteins to methionine. This Listeria welshimeri serovar 6b (strain ATCC 35897 / DSM 20650 / CCUG 15529 / CIP 8149 / NCTC 11857 / SLCC 5334 / V8) protein is Peptide methionine sulfoxide reductase MsrA.